Consider the following 818-residue polypeptide: MVSWRRRPGPGLARLWGLCCLVLGCWRGALGCPASCRCSSWRIWCSEPVPGITSFPVPQRSTEDDNVTEIYIANQRKLESINDNEVGFYVGLKNLTVVDSGLRFVSRQAFVKNINLQYINLSRNKLSSLSKKPFRHLGLSDLILVDNPFKCSCEIMWIKKFQETKFYTEAQDIYCVDDNNKRIALMDMKVPNCDLPSANLSNYNITVVEGKSITLYCDTTGGPPPNVSWVLTNLVSNHESDTSKNPASLTIKNVSSMDSGLWISCVAENIVGEVQTSAELTVFFAPNITFIESPTPDHHWCIPFTVKGNPKPTLQWFYEGAILNESEYICTKIHVINQSEYHGCLQLDNPTHLNNGAYTLLAKNEYGEDEKRVDAHFMSVPGDGSGPIVDPDVYEYETTPNDLGDTTNNSNQITSPDVSNKENEDSITVYVVVGIAALVCTGLVIMLIILKFGRHSKFGMKGPSSVISNDDDSASPLHHISNGSNTPSSSEGGPDAVIIGMTKIPVIENPQYFGITNSQLKPDTFVQHIKRHNIVLKRELGEGAFGKVFLAECYNLCPEQDKILVAVKTLKDASDNARKDFHREAELLTNLQHEHIVKFYGVCVEGDPLIMVFEYMKHGDLNKFLRAHGPDAVLMAEGNRPAELTQSQMLHIAQQIAAGMVYLASQHFVHRDLATRNCLVGENLLVKIGDFGMSRDVYSTDYYRVGGHTMLPIRWMPPESIMYRKFTTESDVWSLGVVLWEIFTYGKQPWYQLSNNEVIECITQGRVLQRPRTCPKEVYDLMLGCWQREPHMRLNIKEIHSLLQNLAKASPVYLDILG.

An N-terminal signal peptide occupies residues 1-31; the sequence is MVSWRRRPGPGLARLWGLCCLVLGCWRGALG. 2 cysteine pairs are disulfide-bonded: Cys32–Cys38 and Cys36–Cys45. Residues 32-426 lie on the Extracellular side of the membrane; that stretch reads CPASCRCSSW…DVSNKENEDS (395 aa). N-linked (GlcNAc...) asparagine glycosylation is present at Asn66. Residues 71 to 92 form an LRR 1 repeat; it reads YIANQRKLESINDNEVGFYVGL. A glycan (N-linked (GlcNAc...) asparagine) is linked at Asn94. Residues 95–116 form an LRR 2 repeat; the sequence is LTVVDSGLRFVSRQAFVKNINL. Asn120 carries N-linked (GlcNAc...) asparagine glycosylation. Cystine bridges form between Cys151-Cys175 and Cys153-Cys193. The Ig-like C2-type 1 domain occupies 196-281; the sequence is PSANLSNYNI…GEVQTSAELT (86 aa). N-linked (GlcNAc...) asparagine glycosylation is found at Asn199, Asn204, Asn226, Asn253, Asn287, Asn324, and Asn337. Cysteines 217 and 265 form a disulfide. An Ig-like C2-type 2 domain is found at 295–364; sequence TPDHHWCIPF…NGAYTLLAKN (70 aa). A disulfide bridge links Cys301 with Cys344. The provides specificity for BDNF as ligand versus NTF3 and NTF4 stretch occupies residues 384-394; sequence GSGPIVDPDVY. Residues 400 to 418 show a composition bias toward polar residues; it reads PNDLGDTTNNSNQITSPDV. A disordered region spans residues 400-420; that stretch reads PNDLGDTTNNSNQITSPDVSN. Residue Asn408 is glycosylated (N-linked (GlcNAc...) asparagine). A helical transmembrane segment spans residues 427–450; that stretch reads ITVYVVVGIAALVCTGLVIMLIIL. Residues 451-818 are Cytoplasmic-facing; it reads KFGRHSKFGM…ASPVYLDILG (368 aa). A disordered region spans residues 469–494; it reads NDDDSASPLHHISNGSNTPSSSEGGP. Polar residues predominate over residues 481-491; the sequence is SNGSNTPSSSE. Tyr512 is subject to Phosphotyrosine; by autocatalysis. The Protein kinase domain occupies 534–803; the sequence is IVLKRELGEG…LNIKEIHSLL (270 aa). ATP-binding positions include 540–548 and Lys568; that span reads LGEGAFGKV. The active-site Proton acceptor is Asp672. Phosphotyrosine; by autocatalysis is present on residues Tyr698, Tyr702, Tyr703, and Tyr813.

The protein belongs to the protein kinase superfamily. Tyr protein kinase family. Insulin receptor subfamily. Exists in a dynamic equilibrium between monomeric (low affinity) and dimeric (high affinity) structures. Interacts (phosphorylated upon activation by BDNF) with SHC1; mediates SHC1 phosphorylation and activation. Interacts (phosphorylated upon activation by BDNF) with PLCG1 and/or PLCG2; mediates PLCG1 phosphorylation and activation. Interacts with SH2B1 and SH2B2. Interacts with NGFR; may regulate the ligand specificity of the receptor. Interacts with SORCS2; this interaction is important for normal targeting to post-synaptic densities in response to high-frequency stimulation. Interacts (phosphorylated upon ligand-binding) with SH2D1A; regulates NTRK2. Interacts with SQSTM1 and KIDINS220. Interacts (phosphorylated upon ligand-binding) with FRS2; activates the MAPK signaling pathway. Interacts with APPL1. Interacts with MAPK8IP3/JIP3 and KLC1; interaction with KLC1 is mediated by MAPK8IP3/JIP3. Ligand-mediated auto-phosphorylation. As to expression, detected in embryonic brain and orsal root ganglia.

The protein localises to the cell membrane. Its subcellular location is the endosome membrane. It localises to the cell projection. The protein resides in the axon. It is found in the dendrite. The protein localises to the cytoplasm. Its subcellular location is the perinuclear region. It localises to the postsynaptic density. The catalysed reaction is L-tyrosyl-[protein] + ATP = O-phospho-L-tyrosyl-[protein] + ADP + H(+). With respect to regulation, the neuronal activity and the influx of calcium positively regulate the kinase activity and the internalization of the receptor which are both important for active signaling. Regulated by NGFR that may control the internalization of the receptor. NGFR may also stimulate the activation by BDNF compared to NTF3 and NTF4. The formation of active receptors dimers able to fully transduce the ligand-mediated signal, may be negatively regulated by the formation of inactive heterodimers with the non-catalytic isoforms. Its function is as follows. Receptor tyrosine kinase involved in the development and the maturation of the central and the peripheral nervous systems through regulation of neuron survival, proliferation, migration, differentiation, and synapse formation and plasticity. Receptor for BDNF/brain-derived neurotrophic factor and NTF4/neurotrophin-4. Alternatively can also bind NTF3/neurotrophin-3 which is less efficient in activating the receptor but regulates neuron survival through NTRK2. Upon ligand-binding, undergoes homodimerization, autophosphorylation and activation. Recruits, phosphorylates and/or activates several downstream effectors including SHC1, FRS2, SH2B1, SH2B2 and PLCG1 that regulate distinct overlapping signaling cascades. Through SHC1, FRS2, SH2B1, SH2B2 activates the GRB2-Ras-MAPK cascade that regulates for instance neuronal differentiation including neurite outgrowth. Through the same effectors controls the Ras-PI3 kinase-AKT1 signaling cascade that mainly regulates growth and survival. Through PLCG1 and the downstream protein kinase C-regulated pathways controls synaptic plasticity. Thereby, plays a role in learning and memory by regulating both short term synaptic function and long-term potentiation. PLCG1 also leads to NF-Kappa-B activation and the transcription of genes involved in cell survival. Hence, it is able to suppress anoikis, the apoptosis resulting from loss of cell-matrix interactions. May also play a role in neutrophin-dependent calcium signaling in glial cells and mediate communication between neurons and glia. This chain is BDNF/NT-3 growth factors receptor (NTRK2), found in Gallus gallus (Chicken).